Reading from the N-terminus, the 207-residue chain is Ribonuclease HII (207 aa).

Positions 20–207 (QLFAGVDEVG…KPVKRVLGIE (188 aa)) constitute an RNase H type-2 domain. 3 residues coordinate a divalent metal cation: Asp26, Glu27, and Asp118.

It belongs to the RNase HII family. Mn(2+) serves as cofactor. The cofactor is Mg(2+).

Its subcellular location is the cytoplasm. The enzyme catalyses Endonucleolytic cleavage to 5'-phosphomonoester.. Functionally, endonuclease that specifically degrades the RNA of RNA-DNA hybrids. The polypeptide is Ribonuclease HII (Aliivibrio fischeri (strain ATCC 700601 / ES114) (Vibrio fischeri)).